The following is a 117-amino-acid chain: UPF0321 protein PJ695.01c (117 aa).

An N-terminal signal peptide occupies residues 1–17 (MLLLLYICCLFLKFILA). Residues Asn39, Asn65, Asn71, and Asn104 are each glycosylated (N-linked (GlcNAc...) asparagine).

This sequence belongs to the UPF0321 family.

The sequence is that of UPF0321 protein PJ695.01c from Schizosaccharomyces pombe (strain 972 / ATCC 24843) (Fission yeast).